Consider the following 197-residue polypeptide: Imidazoleglycerol-phosphate dehydratase (197 aa).

It belongs to the imidazoleglycerol-phosphate dehydratase family.

It is found in the cytoplasm. It catalyses the reaction D-erythro-1-(imidazol-4-yl)glycerol 3-phosphate = 3-(imidazol-4-yl)-2-oxopropyl phosphate + H2O. It participates in amino-acid biosynthesis; L-histidine biosynthesis; L-histidine from 5-phospho-alpha-D-ribose 1-diphosphate: step 6/9. This Methanocaldococcus jannaschii (strain ATCC 43067 / DSM 2661 / JAL-1 / JCM 10045 / NBRC 100440) (Methanococcus jannaschii) protein is Imidazoleglycerol-phosphate dehydratase.